The following is a 151-amino-acid chain: uncharacterized protein (151 aa).

Positions 1-32 are cleaved as a signal peptide; sequence MEEAEKAKRRSIELLNETRNCAYSSFVALAEA. A helical transmembrane segment spans residues 45-67; the sequence is AIGFAGGISGSGHICGALWGSIA.

The protein resides in the membrane. This is an uncharacterized protein from Archaeoglobus fulgidus (strain ATCC 49558 / DSM 4304 / JCM 9628 / NBRC 100126 / VC-16).